The sequence spans 226 residues: Probable septum site-determining protein MinC (226 aa).

The protein belongs to the MinC family. In terms of assembly, interacts with MinD and FtsZ.

Functionally, cell division inhibitor that blocks the formation of polar Z ring septums. Rapidly oscillates between the poles of the cell to destabilize FtsZ filaments that have formed before they mature into polar Z rings. Prevents FtsZ polymerization. This chain is Probable septum site-determining protein MinC, found in Edwardsiella ictaluri (strain 93-146).